A 318-amino-acid polypeptide reads, in one-letter code: Methionyl-tRNA formyltransferase (318 aa).

112-115 (SILP) lines the (6S)-5,6,7,8-tetrahydrofolate pocket.

The protein belongs to the Fmt family.

It carries out the reaction L-methionyl-tRNA(fMet) + (6R)-10-formyltetrahydrofolate = N-formyl-L-methionyl-tRNA(fMet) + (6S)-5,6,7,8-tetrahydrofolate + H(+). In terms of biological role, attaches a formyl group to the free amino group of methionyl-tRNA(fMet). The formyl group appears to play a dual role in the initiator identity of N-formylmethionyl-tRNA by promoting its recognition by IF2 and preventing the misappropriation of this tRNA by the elongation apparatus. The polypeptide is Methionyl-tRNA formyltransferase (Shewanella baltica (strain OS185)).